The following is a 168-amino-acid chain: Mediator of RNA polymerase II transcription subunit 31 (168 aa).

The span at Glu-113–Glu-159 shows a compositional bias: acidic residues. The interval Glu-113 to Thr-168 is disordered.

It belongs to the Mediator complex subunit 31 family. In terms of assembly, component of the Mediator complex.

It localises to the nucleus. Its function is as follows. Component of the Mediator complex, a coactivator involved in the regulated transcription of nearly all RNA polymerase II-dependent genes. Mediator functions as a bridge to convey information from gene-specific regulatory proteins to the basal RNA polymerase II transcription machinery. Mediator is recruited to promoters by direct interactions with regulatory proteins and serves as a scaffold for the assembly of a functional preinitiation complex with RNA polymerase II and the general transcription factors. The sequence is that of Mediator of RNA polymerase II transcription subunit 31 (mdt-31) from Caenorhabditis briggsae.